Consider the following 198-residue polypeptide: MASALLRKATVGGSAAAAAARWASRGLASVGSGSDIVSAAPGVSLQKARSWDEGVATNFSTTPLKDIFHGKKVVIFGLPGAYTGVCSQAHVPSYKNNIDKLKAKGVDSVICVSVNDPYALNGWAEKLQAKDAIEFYGDFDGSFHKSLDLEVDLSAALLGRRSHRWSAFVDDGKIKAFNVEVAPSDFKVSGAEVILDQI.

A mitochondrion-targeting transit peptide spans 1 to 27 (MASALLRKATVGGSAAAAAARWASRGL). In terms of domain architecture, Thioredoxin spans 34-198 (SDIVSAAPGV…SGAEVILDQI (165 aa)). The active-site Cysteine sulfenic acid (-SOH) intermediate is the Cys-86.

Belongs to the peroxiredoxin family. Prx5 subfamily. Monomer.

It localises to the mitochondrion matrix. The catalysed reaction is [glutaredoxin]-dithiol + a hydroperoxide = [glutaredoxin]-disulfide + an alcohol + H2O. Its function is as follows. Thiol-specific peroxidase that catalyzes the reduction of hydrogen peroxide and organic hydroperoxides to water and alcohols, respectively. Plays a role in cell protection against oxidative stress by detoxifying peroxides. Reduces preferentially hydrogen peroxide rather than alkyl peroxides. May be involved in mitochondrial redox homeostasis. The sequence is that of Peroxiredoxin-2F, mitochondrial (PRXIIF) from Oryza sativa subsp. japonica (Rice).